The following is a 218-amino-acid chain: Cytidylate kinase (218 aa).

ATP is bound at residue 7–15 (GPSASGKSS).

The protein belongs to the cytidylate kinase family. Type 1 subfamily.

The protein resides in the cytoplasm. The enzyme catalyses CMP + ATP = CDP + ADP. The catalysed reaction is dCMP + ATP = dCDP + ADP. In Borrelia hermsii (strain HS1 / DAH), this protein is Cytidylate kinase.